Consider the following 612-residue polypeptide: Dihydroxy-acid dehydratase (612 aa).

Mg(2+) is bound at residue D81. [2Fe-2S] cluster is bound at residue C122. Mg(2+) contacts are provided by D123 and K124. At K124 the chain carries N6-carboxylysine. Residue C193 coordinates [2Fe-2S] cluster. E489 is a binding site for Mg(2+). The active-site Proton acceptor is the S515.

This sequence belongs to the IlvD/Edd family. Homodimer. [2Fe-2S] cluster is required as a cofactor. Requires Mg(2+) as cofactor.

It carries out the reaction (2R)-2,3-dihydroxy-3-methylbutanoate = 3-methyl-2-oxobutanoate + H2O. The enzyme catalyses (2R,3R)-2,3-dihydroxy-3-methylpentanoate = (S)-3-methyl-2-oxopentanoate + H2O. It participates in amino-acid biosynthesis; L-isoleucine biosynthesis; L-isoleucine from 2-oxobutanoate: step 3/4. Its pathway is amino-acid biosynthesis; L-valine biosynthesis; L-valine from pyruvate: step 3/4. Functions in the biosynthesis of branched-chain amino acids. Catalyzes the dehydration of (2R,3R)-2,3-dihydroxy-3-methylpentanoate (2,3-dihydroxy-3-methylvalerate) into 2-oxo-3-methylpentanoate (2-oxo-3-methylvalerate) and of (2R)-2,3-dihydroxy-3-methylbutanoate (2,3-dihydroxyisovalerate) into 2-oxo-3-methylbutanoate (2-oxoisovalerate), the penultimate precursor to L-isoleucine and L-valine, respectively. The protein is Dihydroxy-acid dehydratase of Xanthomonas oryzae pv. oryzae (strain MAFF 311018).